The following is a 218-amino-acid chain: Small ribosomal subunit protein uS3c (218 aa).

Residues 47–118 (VQKNMRTSSG…KLNIAVTRIA (72 aa)) form the KH type-2 domain.

This sequence belongs to the universal ribosomal protein uS3 family. In terms of assembly, part of the 30S ribosomal subunit.

It is found in the plastid. It localises to the chloroplast. This is Small ribosomal subunit protein uS3c (rps3) from Nicotiana tomentosiformis (Tobacco).